A 244-amino-acid polypeptide reads, in one-letter code: Adenosine 5'-phosphosulfate reductase (244 aa).

The [4Fe-4S] cluster site is built by Cys129, Cys130, Cys212, and Cys215. Residue Cys240 is the Nucleophile; cysteine thiosulfonate intermediate of the active site.

It belongs to the PAPS reductase family. CysH subfamily. [4Fe-4S] cluster serves as cofactor.

The protein localises to the cytoplasm. It carries out the reaction [thioredoxin]-disulfide + sulfite + AMP + 2 H(+) = adenosine 5'-phosphosulfate + [thioredoxin]-dithiol. It functions in the pathway sulfur metabolism; hydrogen sulfide biosynthesis; sulfite from sulfate. Functionally, catalyzes the formation of sulfite from adenosine 5'-phosphosulfate (APS) using thioredoxin as an electron donor. In Neisseria meningitidis serogroup A / serotype 4A (strain DSM 15465 / Z2491), this protein is Adenosine 5'-phosphosulfate reductase.